The primary structure comprises 466 residues: CBL-interacting protein kinase 20 (466 aa).

Residues 12-276 (YELGRSLGHG…IDELVKHPWF (265 aa)) form the Protein kinase domain. ATP contacts are provided by residues 18 to 26 (LGHGTFSKV) and Lys41. Asp139 acts as the Proton acceptor in catalysis. The interval 162–191 (DFGLSALSASRRHDGLLHTTCGTPSYVAPE) is activation loop. The NAF domain occupies 297–329 (KPANAAMNMKPASLNAFDIISLSQGFDLSGMFC). A PPI region spans residues 337–366 (TQDQLFVTGKPATAIVSRLEEIAETEHFTV). A disordered region spans residues 446–466 (ASEKNQLPAVSEVSPLSSPRN).

It belongs to the protein kinase superfamily. CAMK Ser/Thr protein kinase family. SNF1 subfamily. Mn(2+) serves as cofactor.

The enzyme catalyses L-seryl-[protein] + ATP = O-phospho-L-seryl-[protein] + ADP + H(+). The catalysed reaction is L-threonyl-[protein] + ATP = O-phospho-L-threonyl-[protein] + ADP + H(+). CIPK serine-threonine protein kinases interact with CBL proteins. Binding of a CBL protein to the regulatory NAF domain of CIPK protein lead to the activation of the kinase in a calcium-dependent manner. This is CBL-interacting protein kinase 20 (CIPK20) from Oryza sativa subsp. japonica (Rice).